The following is a 196-amino-acid chain: ATP-dependent Clp protease proteolytic subunit (196 aa).

Residue S98 is the Nucleophile of the active site. H123 is an active-site residue.

Belongs to the peptidase S14 family. As to quaternary structure, fourteen ClpP subunits assemble into 2 heptameric rings which stack back to back to give a disk-like structure with a central cavity, resembling the structure of eukaryotic proteasomes.

Its subcellular location is the cytoplasm. The enzyme catalyses Hydrolysis of proteins to small peptides in the presence of ATP and magnesium. alpha-casein is the usual test substrate. In the absence of ATP, only oligopeptides shorter than five residues are hydrolyzed (such as succinyl-Leu-Tyr-|-NHMec, and Leu-Tyr-Leu-|-Tyr-Trp, in which cleavage of the -Tyr-|-Leu- and -Tyr-|-Trp bonds also occurs).. Functionally, cleaves peptides in various proteins in a process that requires ATP hydrolysis. Has a chymotrypsin-like activity. Plays a major role in the degradation of misfolded proteins. The sequence is that of ATP-dependent Clp protease proteolytic subunit from Sulfurimonas denitrificans (strain ATCC 33889 / DSM 1251) (Thiomicrospira denitrificans (strain ATCC 33889 / DSM 1251)).